The chain runs to 632 residues: Pentatricopeptide repeat-containing protein ELI1, chloroplastic (632 aa).

The N-terminal 19 residues, 1-19, are a transit peptide targeting the chloroplast; the sequence is MASSPLLATSLPQNQLSTT. 10 PPR repeats span residues 94–128, 129–159, 160–194, 196–221, 222–256, 258–292, 293–323, 324–354, 360–395, and 396–426; these read DLFLFTAAINTASINGLKDQAFLLYVQLLSSEINP, NEFTFSSLLKSCSTKSGKLIHTHVLKFGLGI, DPYVATGLVDVYAKGGDVVSAQKVFDRMPERSLVS, TAMITCYAKQGNVEAARALFDSMCER, DIVSWNVMIDGYAQHGFPNDALMLFQKLLAEGKPK, DEITVVAALSACSQIGALETGRWIHVFVKSSRIRL, NVKVCTGLIDMYSKCGSLEEAVLVFNDTPRK, DIVAWNAMIAGYAMHGYSQDALRLFNEMQGI, TDITFIGTLQACAHAGLVNEGIRIFESMGQEYGIKP, and KIEHYGCLVSLLGRAGQLKRAYETIKNMNMD. Residues 431 to 506 form a type E motif region; the sequence is LWSSVLGSCK…EPGISTIEIE (76 aa). Residues 497–512 are required for function in RNA editing; sequence EPGISTIEIENKVHEF. A type E(+) motif region spans residues 507–537; the sequence is NKVHEFRAGDREHSKSKEIYTMLRKISERIK. Positions 538–632 are type DYW motif; it reads SHGYVPNTNT…DGSCSCGDFW (95 aa).

It belongs to the PPR family. PCMP-H subfamily. Requires Zn(2+) as cofactor.

The protein localises to the plastid. It is found in the chloroplast. Functionally, plays a major role in single RNA editing events in chloroplasts. Acts as a site-recognition transacting factor involved in the edition of the site 5 of ndhB1 and ndhB2 (ndhB1-5 and ndhB2-5 sites corresponding to cytidine-830), which are plastid-encoded subunits of the NADH-plastoquinone oxidoreductase. May provide the catalytic activity for editing site conversion. The chain is Pentatricopeptide repeat-containing protein ELI1, chloroplastic from Arabidopsis thaliana (Mouse-ear cress).